Consider the following 149-residue polypeptide: Myosin, essential light chain (149 aa).

2 EF-hand domains span residues 7–42 (SMIDEMKDGFPLFDNKGDGKIDGAQLGDVLRSFGLN) and 79–114 (GSYEDFFEGLKLFDKEGTGLISGAELRHVLATLGEK).

As to quaternary structure, myosin is a hexamer of 2 heavy chains and 4 light chains (two regulatory light chains and two essential light chains).

In Branchiostoma floridae (Florida lancelet), this protein is Myosin, essential light chain.